Consider the following 641-residue polypeptide: Bifunctional enzyme NodQ (641 aa).

The tract at residues 1 to 458 (MSYVQSIPPH…KSARSAMKNQ (458 aa)) is sulfate adenylyltransferase. Positions 22 to 236 (KSILRFITCG…YLETVELDPT (215 aa)) constitute a tr-type G domain. A G1 region spans residues 31–38 (GSVDDGKS). 31 to 38 (GSVDDGKS) provides a ligand contact to GTP. Residues 89-93 (GITID) form a G2 region. The tract at residues 110-113 (DTPG) is G3. GTP is bound by residues 110-114 (DTPGH) and 165-168 (NKID). Residues 165–168 (NKID) form a G4 region. The segment at 202-204 (SAR) is G5. Positions 459-641 (LPAVLWFTGL…GQMTPLQRPT (183 aa)) are adenylyl-sulfate kinase. 467-474 (GLSGSGKS) is a binding site for ATP. Residue Ser-541 is the Phosphoserine intermediate of the active site.

This sequence in the C-terminal section; belongs to the APS kinase family. The protein in the N-terminal section; belongs to the TRAFAC class translation factor GTPase superfamily. Classic translation factor GTPase family. CysN/NodQ subfamily. Sulfate-activating enzymes, NodP and NodQ, may be physically associated.

The catalysed reaction is sulfate + ATP + H(+) = adenosine 5'-phosphosulfate + diphosphate. The enzyme catalyses adenosine 5'-phosphosulfate + ATP = 3'-phosphoadenylyl sulfate + ADP + H(+). In terms of biological role, proposed to provide activated sulfate for transfer to Nod factor. ATP sulfurylase may be the GTPase, regulating ATP sulfurylase activity. APS kinase catalyzes the synthesis of activated sulfate. The protein is Bifunctional enzyme NodQ (nodQ) of Rhizobium meliloti (strain 1021) (Ensifer meliloti).